A 234-amino-acid chain; its full sequence is 2,3-bisphosphoglycerate-dependent phosphoglycerate mutase (234 aa).

Residues 8-15 (RHGESVWN), 21-22 (TG), arginine 60, 87-90 (ERHY), lysine 98, 114-115 (RR), and 183-184 (GN) contribute to the substrate site. The active-site Tele-phosphohistidine intermediate is histidine 9. The Proton donor/acceptor role is filled by glutamate 87.

This sequence belongs to the phosphoglycerate mutase family. BPG-dependent PGAM subfamily. Homodimer.

The enzyme catalyses (2R)-2-phosphoglycerate = (2R)-3-phosphoglycerate. It functions in the pathway carbohydrate degradation; glycolysis; pyruvate from D-glyceraldehyde 3-phosphate: step 3/5. In terms of biological role, catalyzes the interconversion of 2-phosphoglycerate and 3-phosphoglycerate. The chain is 2,3-bisphosphoglycerate-dependent phosphoglycerate mutase from Citrifermentans bemidjiense (strain ATCC BAA-1014 / DSM 16622 / JCM 12645 / Bem) (Geobacter bemidjiensis).